The chain runs to 420 residues: Threonine aspartase 1 (420 aa).

Residues 1 to 23 (MTMEKGMSSGEGLPSRSSQVSAG) are disordered. T234 (nucleophile) is an active-site residue.

It belongs to the Ntn-hydrolase family. In terms of assembly, intramolecular proteolysis generates 2 subunits, alpha and beta, which reassemble through a non-covalent association to form the fully active enzyme.

Protease responsible for KMT2A/MLL1 processing and activation. It also activates KMT2D/MLL2. Through substrate activation, it controls the expression of HOXA genes, and the expression of key cell cycle regulators including CCNA1, CCNB1, CCNE1 and CDKN2A. This chain is Threonine aspartase 1 (TASP1), found in Homo sapiens (Human).